Reading from the N-terminus, the 866-residue chain is Phospholipase D gamma 3 (866 aa).

The C2 domain occupies Pro-31–Phe-170. Asp-232 lines the Ca(2+) pocket. Residues Thr-371–Arg-406 enclose the PLD phosphodiesterase 1 domain. Active-site residues include His-376, Lys-378, and Asp-383. His-376 contributes to the a 1,2-diacyl-sn-glycero-3-phosphate binding site. Residues His-412 and His-444 each contribute to the Ca(2+) site. Residue Gln-572 participates in a 1,2-diacyl-sn-glycero-3-phosphate binding. The residue at position 692 (Ser-692) is a Phosphoserine. The PLD phosphodiesterase 2 domain maps to Phe-712 to Ser-739. Residues His-717, Lys-719, and Asp-724 contribute to the active site. His-717 is a binding site for a 1,2-diacyl-sn-glycero-3-phosphate. Glu-780 lines the Ca(2+) pocket.

The protein belongs to the phospholipase D family. C2-PLD subfamily. The cofactor is Ca(2+). As to expression, highly expressed in inflorescences and old leaves, moderately in stems, roots, siliques and young leaves and low in flowers.

The protein localises to the cytoplasm. The protein resides in the membrane. The enzyme catalyses a 1,2-diacyl-sn-glycero-3-phosphocholine + H2O = a 1,2-diacyl-sn-glycero-3-phosphate + choline + H(+). Inhibited by neomycin. Hydrolyzes glycerol-phospholipids at the terminal phosphodiesteric bond to generate phosphatidic acids (PA). Plays an important role in various cellular processes, including phytohormone action, vesicular trafficking, secretion, cytoskeletal arrangement, meiosis, tumor promotion, pathogenesis, membrane deterioration and senescence. Can use phosphatidylserine but prefers ethanolamine-containing lipids as substrates. The polypeptide is Phospholipase D gamma 3 (Arabidopsis thaliana (Mouse-ear cress)).